The primary structure comprises 299 residues: N-acetylaspartate synthetase (299 aa).

A compositionally biased stretch (pro residues) spans 44–57; it reads AAPGPAAAPPPAAG. A disordered region spans residues 44–70; that stretch reads AAPGPAAAPPPAAGPQPHGGTGGAGPP. The span at 60–70 shows a compositional bias: gly residues; that stretch reads PHGGTGGAGPP. The chain crosses the membrane as a helical span at residues 118-138; the sequence is YALLAALCFAVTRSLLLTCLV. Residues 143-280 enclose the N-acetyltransferase domain; that stretch reads LALRYYYSRK…VLPGMTLSLA (138 aa).

The protein belongs to the NAT8 family. Expressed in brain, kidney, liver and spleen. In brain, present in neurons but not in astrocytes (at protein level). Expressed in brain, thymus and spleen.

The protein resides in the cytoplasm. Its subcellular location is the microsome membrane. The protein localises to the mitochondrion membrane. It localises to the endoplasmic reticulum membrane. It carries out the reaction L-aspartate + acetyl-CoA = N-acetyl-L-aspartate + CoA + H(+). Aminooxyacetic acid (AOAA) blocks its activity in both cytoplasm and mitochondria. In terms of biological role, catalyzes the synthesis of N-acetylaspartate acid (NAA) from L-aspartate and acetyl-CoA. Promotes dopamine uptake by regulating TNF-alpha expression. Attenuates methamphetamine-induced inhibition of dopamine uptake. This is N-acetylaspartate synthetase (Nat8l) from Mus musculus (Mouse).